Reading from the N-terminus, the 28-residue chain is Short cationic peptide-1b (28 aa).

A Glutamic acid 1-amide modification is found at Glu-28.

Expressed by the venom gland.

The protein resides in the secreted. This Cupiennius salei (American wandering spider) protein is Short cationic peptide-1b.